The sequence spans 229 residues: MEIVIMIQEALKALRRGEIVLVFDADNRERETDMIVAAEKIKPEHIRIMRNDAGGLICVPVSWENSEKLGIPYMTDIMEEASGRYPVLGKLSPHDIPYDEKSAFSITVNHRKTFTGITDNDRALTIGELAGICRDDRHESFGDLFRSPGHVTLLRAADGHVLRRGGHTEMSIALMEMAGLTGVAVCCEMMDDRTGNSLSTEDAMKYAREHDLIFMSGAELIESYMEFRS.

Residues 28–29, aspartate 33, 164–168, and glutamate 188 each bind D-ribulose 5-phosphate; these read RE and RGGHT. Position 29 (glutamate 29) interacts with Mg(2+). Histidine 167 provides a ligand contact to Mg(2+).

This sequence belongs to the DHBP synthase family. As to quaternary structure, homodimer. The cofactor is Mg(2+). It depends on Mn(2+) as a cofactor.

The catalysed reaction is D-ribulose 5-phosphate = (2S)-2-hydroxy-3-oxobutyl phosphate + formate + H(+). The protein operates within cofactor biosynthesis; riboflavin biosynthesis; 2-hydroxy-3-oxobutyl phosphate from D-ribulose 5-phosphate: step 1/1. Catalyzes the conversion of D-ribulose 5-phosphate to formate and 3,4-dihydroxy-2-butanone 4-phosphate. The sequence is that of 3,4-dihydroxy-2-butanone 4-phosphate synthase from Methanothermobacter thermautotrophicus (strain ATCC 29096 / DSM 1053 / JCM 10044 / NBRC 100330 / Delta H) (Methanobacterium thermoautotrophicum).